The chain runs to 110 residues: MTTVHSIADPCDPEVSPTNNRHLTVSYASRYPDYTRIPALTMKGQWLEAAGFATGTEVDVRVMNGCIVLTAQQPQPEESELMQSLRQVSKLSARKQKQVQAFIDVMAGSK.

In terms of domain architecture, SpoVT-AbrB spans 29 to 74 (SRYPDYTRIPALTMKGQWLEAAGFATGTEVDVRVMNGCIVLTAQQP).

Belongs to the SymE family.

The protein localises to the cytoplasm. Functionally, involved in the degradation and recycling of damaged RNA. It is itself a target for degradation by the ATP-dependent protease Lon. The chain is Endoribonuclease SymE from Salmonella heidelberg (strain SL476).